Reading from the N-terminus, the 280-residue chain is 4-diphosphocytidyl-2-C-methyl-D-erythritol kinase (280 aa).

Residue Lys-8 is part of the active site. ATP is bound at residue 91 to 101; it reads PVSAGLAGGST. Asp-133 is a catalytic residue.

This sequence belongs to the GHMP kinase family. IspE subfamily.

It carries out the reaction 4-CDP-2-C-methyl-D-erythritol + ATP = 4-CDP-2-C-methyl-D-erythritol 2-phosphate + ADP + H(+). It functions in the pathway isoprenoid biosynthesis; isopentenyl diphosphate biosynthesis via DXP pathway; isopentenyl diphosphate from 1-deoxy-D-xylulose 5-phosphate: step 3/6. Catalyzes the phosphorylation of the position 2 hydroxy group of 4-diphosphocytidyl-2C-methyl-D-erythritol. In Clostridium beijerinckii (strain ATCC 51743 / NCIMB 8052) (Clostridium acetobutylicum), this protein is 4-diphosphocytidyl-2-C-methyl-D-erythritol kinase.